The primary structure comprises 409 residues: Peptidase T (409 aa).

Residue His-78 coordinates Zn(2+). The active site involves Asp-80. Asp-140 is a binding site for Zn(2+). Glu-173 acts as the Proton acceptor in catalysis. Positions 174, 196, and 379 each coordinate Zn(2+).

Belongs to the peptidase M20B family. Zn(2+) is required as a cofactor.

It is found in the cytoplasm. It catalyses the reaction Release of the N-terminal residue from a tripeptide.. Its function is as follows. Cleaves the N-terminal amino acid of tripeptides. This Salmonella dublin (strain CT_02021853) protein is Peptidase T.